Here is a 111-residue protein sequence, read N- to C-terminus: Cyclin-dependent protein kinase inhibitor SMR2 (111 aa).

The interval 1–66 (MSKLLETLEE…PPPRKRPREI (66 aa)) is disordered. Residues 10 to 35 (EEKTVEQKPRSQEEEDHQDSSKKEEL) are compositionally biased toward basic and acidic residues.

In terms of assembly, interacts with CYCD2-1. Interacts with CDKB1-1. As to expression, expressed at low levels in roots and stems. Expressed in the root vascular tissue.

Its subcellular location is the nucleus. Cyclin-dependent protein kinase (CDK) inhibitor that restricts cell proliferation and cooperates with SIM and SMR1 to promote endoreplication during leaf development. This is Cyclin-dependent protein kinase inhibitor SMR2 from Arabidopsis thaliana (Mouse-ear cress).